We begin with the raw amino-acid sequence, 224 residues long: Jacalin-related lectin 24 (224 aa).

Positions 8 to 160 (MFKVGPIGSK…LTSIGIYVYP (153 aa)) constitute a Jacalin-type lectin domain.

It belongs to the jacalin lectin family.

The sequence is that of Jacalin-related lectin 24 (JAL24) from Arabidopsis thaliana (Mouse-ear cress).